A 335-amino-acid chain; its full sequence is F420-dependent glucose-6-phosphate dehydrogenase 1 (335 aa).

Aspartate 38 is a binding site for coenzyme F420-(gamma-Glu)n. Residue histidine 39 is the Proton donor of the active site. Residues threonine 75 and 106 to 107 (TG) contribute to the coenzyme F420-(gamma-Glu)n site. Glutamate 108 (proton acceptor) is an active-site residue. Coenzyme F420-(gamma-Glu)n-binding positions include asparagine 111, 176–177 (GG), and 179–180 (VV). Substrate is bound by residues threonine 194, lysine 197, lysine 258, and arginine 282.

This sequence belongs to the F420-dependent glucose-6-phosphate dehydrogenase family. As to quaternary structure, homodimer.

The catalysed reaction is oxidized coenzyme F420-(gamma-L-Glu)(n) + D-glucose 6-phosphate + H(+) = 6-phospho-D-glucono-1,5-lactone + reduced coenzyme F420-(gamma-L-Glu)(n). Catalyzes the coenzyme F420-dependent oxidation of glucose 6-phosphate (G6P) to 6-phosphogluconolactone. In Rhodococcus jostii (strain RHA1), this protein is F420-dependent glucose-6-phosphate dehydrogenase 1.